A 155-amino-acid polypeptide reads, in one-letter code: Small ribosomal subunit protein uS7c (155 aa).

Belongs to the universal ribosomal protein uS7 family. In terms of assembly, part of the 30S ribosomal subunit.

It localises to the plastid. The protein resides in the chloroplast. One of the primary rRNA binding proteins, it binds directly to 16S rRNA where it nucleates assembly of the head domain of the 30S subunit. This chain is Small ribosomal subunit protein uS7c (rps7), found in Pinus thunbergii (Japanese black pine).